A 180-amino-acid polypeptide reads, in one-letter code: Large ribosomal subunit protein eL18 (180 aa).

The disordered stretch occupies residues 152-180; that stretch reads FGPAPGVPGSHTKPYVISKSRERTNAHRA. Residues 170–180 show a composition bias toward basic and acidic residues; sequence KSRERTNAHRA.

The protein belongs to the eukaryotic ribosomal protein eL18 family.

It is found in the cytoplasm. This is Large ribosomal subunit protein eL18 (RPL18) from Taenia asiatica (Asian tapeworm).